The primary structure comprises 421 residues: Cyclin-A1 (421 aa).

The interval 1 to 21 (MHRQSSKSGVALPPVGQGPDA) is disordered.

It belongs to the cyclin family. Cyclin AB subfamily. As to quaternary structure, interacts with INCA1 and KLHDC9. Interacts with the CDK2 and CDC2 protein kinases to form a serine/threonine kinase holoenzyme complex. The cyclin subunit imparts substrate specificity to the complex. Found in a complex with CDK2, CABLES1 and CCNE1. Polyubiquitinated via 'Lys-11'-linked ubiquitin by the anaphase-promoting complex (APC/C), leading to its degradation by the proteasome. Deubiquitinated and stabilized by USP37 enables entry into S phase. Ubiquitinated during the G1 phase by the SCF(FBXO31) complex, leading to its proteasomal degradation. In terms of tissue distribution, testis and ovaries.

The protein localises to the nucleus. The protein resides in the cytoplasm. It localises to the cytoskeleton. It is found in the spindle. Its function is as follows. May be involved in the control of the cell cycle at the G1/S (start) and G2/M (mitosis) transitions. May primarily function in the control of the germline meiotic cell cycle and additionally in the control of mitotic cell cycle in some somatic cells. This Mus musculus (Mouse) protein is Cyclin-A1 (Ccna1).